We begin with the raw amino-acid sequence, 108 residues long: UPF0060 membrane protein DSY4629 (108 aa).

4 helical membrane passes run 5–25 (IILFILAGLAEIGGGYLVWLW), 31–51 (PFWYGIIGGLILVLYGVIPTL), 60–80 (VYAAYGGVFVILAVLWGWGID), and 86–106 (NYDWIGAVICLVGVSVMLWAP).

It belongs to the UPF0060 family.

Its subcellular location is the cell membrane. This Desulfitobacterium hafniense (strain Y51) protein is UPF0060 membrane protein DSY4629.